Consider the following 291-residue polypeptide: Undecaprenyl-diphosphatase 2 (291 aa).

The next 6 membrane-spanning stretches (helical) occupy residues 39 to 59, 85 to 105, 118 to 138, 203 to 223, 231 to 251, and 262 to 282; these read PGAA…LIYF, AQMG…GVTL, ITAT…RLAA, FLLA…DAAA, PTVF…AWFM, and FVWY…TGAL.

This sequence belongs to the UppP family.

The protein resides in the cell membrane. The catalysed reaction is di-trans,octa-cis-undecaprenyl diphosphate + H2O = di-trans,octa-cis-undecaprenyl phosphate + phosphate + H(+). Catalyzes the dephosphorylation of undecaprenyl diphosphate (UPP). Confers resistance to bacitracin. In Streptomyces avermitilis (strain ATCC 31267 / DSM 46492 / JCM 5070 / NBRC 14893 / NCIMB 12804 / NRRL 8165 / MA-4680), this protein is Undecaprenyl-diphosphatase 2.